Consider the following 479-residue polypeptide: Aspartyl/glutamyl-tRNA(Asn/Gln) amidotransferase subunit B (479 aa).

This sequence belongs to the GatB/GatE family. GatB subfamily. As to quaternary structure, heterotrimer of A, B and C subunits.

It carries out the reaction L-glutamyl-tRNA(Gln) + L-glutamine + ATP + H2O = L-glutaminyl-tRNA(Gln) + L-glutamate + ADP + phosphate + H(+). The catalysed reaction is L-aspartyl-tRNA(Asn) + L-glutamine + ATP + H2O = L-asparaginyl-tRNA(Asn) + L-glutamate + ADP + phosphate + 2 H(+). In terms of biological role, allows the formation of correctly charged Asn-tRNA(Asn) or Gln-tRNA(Gln) through the transamidation of misacylated Asp-tRNA(Asn) or Glu-tRNA(Gln) in organisms which lack either or both of asparaginyl-tRNA or glutaminyl-tRNA synthetases. The reaction takes place in the presence of glutamine and ATP through an activated phospho-Asp-tRNA(Asn) or phospho-Glu-tRNA(Gln). The chain is Aspartyl/glutamyl-tRNA(Asn/Gln) amidotransferase subunit B from Geobacter sp. (strain M21).